The following is a 685-amino-acid chain: Coiled-coil domain-containing protein 8 homolog (685 aa).

The tract at residues 93–127 is disordered; that stretch reads VGTYDSSNGSDSELSDFDTSKVKGNRSSSGRTRKV. Residues S142 and S146 each carry the phosphoserine modification. 4 disordered regions span residues 207–263, 281–538, 558–579, and 599–623; these read QRVK…GTRR, VPPF…KAEA, QRAE…TGAT, and REEA…KQVK. A compositionally biased stretch (polar residues) spans 219-228; the sequence is EVGQTQQAST. Residues 246-256 show a composition bias toward basic and acidic residues; sequence DSSRNTGDRSD. Low complexity-rich tracts occupy residues 299 to 329, 337 to 353, 361 to 401, and 409 to 420; these read AENQ…PRAE, EAVA…PRAE, EAAA…PRAE, and EAAASPIAEAAA. The span at 425–440 shows a compositional bias: basic and acidic residues; it reads ELVDSPRAETAADPRA. Over residues 458–468 the composition is skewed to low complexity; it reads AAASPIAEAAA. The span at 473 to 488 shows a compositional bias: basic and acidic residues; it reads ELVDSPRAETAADPRA. A compositionally biased stretch (low complexity) spans 505 to 519; it reads EVAASPRAEAAASPR. A compositionally biased stretch (basic and acidic residues) spans 558–567; that stretch reads QRAEAIDSQR. Residues 611–622 are compositionally biased toward polar residues; sequence SAGSGSRAQKQV. A PxLPxI/L motif; mediates interaction with ANKRA2 motif is present at residues 647–653; it reads PRLPTLP.

Component of the 3M complex, composed of core components CUL7, CCDC8 and OBSL1. Interacts (via PxLPxI/L motif) with ANKRA2 (via ankyrin repeats); may link the 3M complex to histone deacetylases including HDAC4 and HDAC5.

The protein localises to the cytoplasm. It is found in the cytoskeleton. Its subcellular location is the microtubule organizing center. The protein resides in the centrosome. Functionally, core component of the 3M complex, a complex required to regulate microtubule dynamics and genome integrity. It is unclear how the 3M complex regulates microtubules, it could act by controlling the level of a microtubule stabilizer. Required for localization of CUL7 to the centrosome. This Mus musculus (Mouse) protein is Coiled-coil domain-containing protein 8 homolog (Ccdc8).